Here is a 160-residue protein sequence, read N- to C-terminus: uncharacterized protein (160 aa).

3 consecutive C2H2-type zinc fingers follow at residues 10 to 32, 41 to 64, and 75 to 98; these read LSCLLCEQTFDATEKLDEHLPTH, QTCDICGRTMRSSLELHQHYKRYH, and FQCQLCDKVFLLQDHLKVHVKIEH. Position 115 is a phosphotyrosine (Tyr115). Ser116 carries the post-translational modification Phosphoserine.

The protein resides in the nucleus. In terms of biological role, may be involved in transcriptional regulation. This is an uncharacterized protein from Drosophila melanogaster (Fruit fly).